The chain runs to 96 residues: Protein RnfH (96 aa).

It belongs to the UPF0125 (RnfH) family.

The sequence is that of Protein RnfH from Hahella chejuensis (strain KCTC 2396).